The chain runs to 298 residues: Apolipoprotein E (298 aa).

Residues 1–18 (MKILWAALVLTLLAGCRA) form the signal peptide. 6 consecutive repeat copies span residues 74-95 (LLME…KEVG), 96-117 (PMAE…ARLA), 118-139 (GDME…AMLG), 140-161 (QSSE…KRLQ), 162-183 (RDAE…EGAE), and 223-244 (GRLE…EQME). Residues 74–244 (LLMEDTMKEL…RLEEVREQME (171 aa)) are 8 X 22 AA approximate tandem repeats. Position 137 is a methionine sulfoxide (Met137). Position 141 is a phosphoserine (Ser141). The interval 152 to 162 (HLRKLRKRLQR) is LDL and other lipoprotein receptors binding. Heparin is bound at residue 156-159 (LRKR). The lipid-binding and lipoprotein association stretch occupies residues 204 to 272 (ALTSHPLRER…SWFEPMVEDL (69 aa)). Heparin is bound at residue 218–225 (GEQVRGRL). Residues 260-272 (RLKSWFEPMVEDL) are specificity for association with VLDL.

It belongs to the apolipoprotein A1/A4/E family. Homotetramer. May interact with ABCA1; functionally associated with ABCA1 in the biogenesis of HDLs. May interact with APP/A4 amyloid-beta peptide; the interaction is extremely stable in vitro but its physiological significance is unclear. May interact with MAPT. May interact with MAP2. In the cerebrospinal fluid, interacts with secreted SORL1. Interacts with PMEL; this allows the loading of PMEL luminal fragment on ILVs to induce fibril nucleation. Post-translationally, APOE exists as multiple glycosylated and sialylated glycoforms within cells and in plasma. The extent of glycosylation and sialylation are tissue and context specific. Glycated in plasma VLDL. In terms of processing, phosphorylated by FAM20C in the extracellular medium.

The protein resides in the secreted. Its subcellular location is the extracellular space. The protein localises to the extracellular matrix. It localises to the extracellular vesicle. It is found in the endosome. The protein resides in the multivesicular body. Its function is as follows. APOE is an apolipoprotein, a protein associating with lipid particles, that mainly functions in lipoprotein-mediated lipid transport between organs via the plasma and interstitial fluids. APOE is a core component of plasma lipoproteins and is involved in their production, conversion and clearance. Apolipoproteins are amphipathic molecules that interact both with lipids of the lipoprotein particle core and the aqueous environment of the plasma. As such, APOE associates with chylomicrons, chylomicron remnants, very low density lipoproteins (VLDL) and intermediate density lipoproteins (IDL) but shows a preferential binding to high-density lipoproteins (HDL). It also binds a wide range of cellular receptors including the LDL receptor/LDLR, the LDL receptor-related proteins LRP1, LRP2 and LRP8 and the very low-density lipoprotein receptor/VLDLR that mediate the cellular uptake of the APOE-containing lipoprotein particles. Finally, APOE also has a heparin-binding activity and binds heparan-sulfate proteoglycans on the surface of cells, a property that supports the capture and the receptor-mediated uptake of APOE-containing lipoproteins by cells. A main function of APOE is to mediate lipoprotein clearance through the uptake of chylomicrons, VLDLs, and HDLs by hepatocytes. APOE is also involved in the biosynthesis by the liver of VLDLs as well as their uptake by peripheral tissues ensuring the delivery of triglycerides and energy storage in muscle, heart and adipose tissues. By participating in the lipoprotein-mediated distribution of lipids among tissues, APOE plays a critical role in plasma and tissues lipid homeostasis. APOE is also involved in two steps of reverse cholesterol transport, the HDLs-mediated transport of cholesterol from peripheral tissues to the liver, and thereby plays an important role in cholesterol homeostasis. First, it is functionally associated with ABCA1 in the biogenesis of HDLs in tissues. Second, it is enriched in circulating HDLs and mediates their uptake by hepatocytes. APOE also plays an important role in lipid transport in the central nervous system, regulating neuron survival and sprouting. This chain is Apolipoprotein E (APOE), found in Hydrochoerus hydrochaeris (Capybara).